The chain runs to 585 residues: A-type ATP synthase subunit A (585 aa).

231-238 (GPFGSGKT) is an ATP binding site.

It belongs to the ATPase alpha/beta chains family. In terms of assembly, has multiple subunits with at least A(3), B(3), C, D, E, F, H, I and proteolipid K(x).

It localises to the cell membrane. It carries out the reaction ATP + H2O + 4 H(+)(in) = ADP + phosphate + 5 H(+)(out). Produces ATP from ADP in the presence of a proton gradient across the membrane. The archaeal alpha chain is a catalytic subunit. In terms of biological role, component of the A-type ATP synthase that produces ATP from ADP in the presence of a proton gradient across the membrane. The A chain is the catalytic subunit. This Thermococcus kodakarensis (strain ATCC BAA-918 / JCM 12380 / KOD1) (Pyrococcus kodakaraensis (strain KOD1)) protein is A-type ATP synthase subunit A.